The chain runs to 114 residues: UPF0102 protein Amet_2739 (114 aa).

This sequence belongs to the UPF0102 family.

The protein is UPF0102 protein Amet_2739 of Alkaliphilus metalliredigens (strain QYMF).